The primary structure comprises 920 residues: Translation initiation factor IF-2 (920 aa).

Basic and acidic residues-rich tracts occupy residues 149–175 (EAEM…EKPV), 186–197 (AEKKATADKAAK), and 255–265 (AKPEGADDKKK). Disordered regions lie at residues 149-197 (EAEM…KAAK) and 245-319 (EAKK…KQRQ). Residues 301–311 (SSGGVGGWRSG) show a composition bias toward gly residues. The tr-type G domain occupies 418 to 585 (PRPPVVTVMG…NVLLQAEILE (168 aa)). The G1 stretch occupies residues 427–434 (GHVDHGKT). Residue 427–434 (GHVDHGKT) coordinates GTP. Residues 452–456 (GITQH) form a G2 region. The segment at 473–476 (DTPG) is G3. GTP is bound by residues 473–477 (DTPGH) and 527–530 (NKID). The G4 stretch occupies residues 527-530 (NKID). Residues 563–565 (SAK) are G5.

The protein belongs to the TRAFAC class translation factor GTPase superfamily. Classic translation factor GTPase family. IF-2 subfamily.

The protein localises to the cytoplasm. Its function is as follows. One of the essential components for the initiation of protein synthesis. Protects formylmethionyl-tRNA from spontaneous hydrolysis and promotes its binding to the 30S ribosomal subunits. Also involved in the hydrolysis of GTP during the formation of the 70S ribosomal complex. The polypeptide is Translation initiation factor IF-2 (Polynucleobacter asymbioticus (strain DSM 18221 / CIP 109841 / QLW-P1DMWA-1) (Polynucleobacter necessarius subsp. asymbioticus)).